A 445-amino-acid chain; its full sequence is Probable D-serine dehydratase (445 aa).

Lysine 119 is subject to N6-(pyridoxal phosphate)lysine.

Belongs to the serine/threonine dehydratase family. DsdA subfamily. Pyridoxal 5'-phosphate is required as a cofactor.

It carries out the reaction D-serine = pyruvate + NH4(+). The polypeptide is Probable D-serine dehydratase (Pseudomonas putida (strain GB-1)).